Consider the following 205-residue polypeptide: Large ribosomal subunit protein uL3 (205 aa).

Belongs to the universal ribosomal protein uL3 family. Part of the 50S ribosomal subunit. Forms a cluster with proteins L14 and L19.

One of the primary rRNA binding proteins, it binds directly near the 3'-end of the 23S rRNA, where it nucleates assembly of the 50S subunit. The sequence is that of Large ribosomal subunit protein uL3 from Thermosipho melanesiensis (strain DSM 12029 / CIP 104789 / BI429).